The primary structure comprises 1149 residues: Potassium channel subfamily U member 1 (1149 aa).

Over 1 to 24 the chain is Extracellular; that stretch reads MFQTKLRNESWEDLQKMSCTTEIQ. The chain crosses the membrane as a helical span at residues 25-45; the sequence is VAFILSSFMTFISGLIILLIF. The Cytoplasmic portion of the chain corresponds to 46–101; it reads RLIWRTVKKWQIIKGTGIILELFTSGSIRRNHVRSLHFHGRFRDRIEMLLSAQTFV. Residues 102-122 traverse the membrane as a helical segment; sequence GQVLVILVFVLSIGSLIIYFI. Residues 123-138 lie on the Extracellular side of the membrane; it reads NSADPVGSCSSYEDKT. A helical membrane pass occupies residues 139–159; that stretch reads IPVDLVFNAFFSFYFGLRFMA. Residues 160–163 lie on the Cytoplasmic side of the membrane; that stretch reads ADDK. A helical membrane pass occupies residues 164 to 184; it reads IKFWLEMNSIVDIFTIPPTFI. The Extracellular portion of the chain corresponds to 185-188; that stretch reads SYYL. Residues 189–209 form a helical; Voltage-sensor membrane-spanning segment; the sequence is KSNWLGLRFLRALRLLELPRI. Topologically, residues 210–226 are cytoplasmic; sequence LQILRAIKTSNSVKFSK. The helical transmembrane segment at 227-247 threads the bilayer; it reads LLSIVLSTWFTAAGFIHLVEN. The Extracellular segment spans residues 248–259; that stretch reads SGDPWLKGRNSQ. Positions 260 to 282 form an intramembrane region, pore-forming; it reads NISYFDSVYLVMATTSTVGFGDV. Positions 276-279 match the Selectivity for potassium motif; sequence TVGF. Topologically, residues 283 to 291 are extracellular; that stretch reads VAKTSLGRT. A helical membrane pass occupies residues 292–312; the sequence is FIIFFTLGSLILFANYIPEMV. Residues 313 to 1149 lie on the Cytoplasmic side of the membrane; the sequence is ELFANKRKYT…EDPFAYSEPL (837 aa). RCK N-terminal domains follow at residues 331–473 and 713–884; these read KKFI…DNII and RNHI…EGSL. Residues 829 to 845 show a composition bias toward low complexity; the sequence is IDSSSDSSPSVSEETAS. Disordered stretches follow at residues 829-851 and 1106-1149; these read IDSSSDSSPSVSEETASCTNGHN and ARNQ…SEPL. A compositionally biased stretch (polar residues) spans 1106–1120; it reads ARNQIRTNSSITSQK.

It belongs to the potassium channel family. Calcium-activated (TC 1.A.1.3) subfamily. KCa5.1/KCNU1 sub-subfamily. In terms of assembly, homotetramer; which constitutes the calcium-activated potassium channel. Interacts with LRRC52; this interaction changes some channel gating properties, such as shifting gating to more negative potentials at a given pH. In terms of tissue distribution, testis-specific.

The protein resides in the cell membrane. Its subcellular location is the cell projection. It localises to the cilium. It is found in the flagellum membrane. The enzyme catalyses K(+)(in) = K(+)(out). Regulated by changes in cytosolic pH; activated by alkalization. VU0546110 acts as a selective inhibitor. The auxiliary subunit LRRC52 shifts the activation of KCNU1 to more negative potentials at a given pH. In terms of biological role, testis-specific potassium channel activated by both intracellular pH and membrane voltage that mediates export of K(+). Represents the primary spermatozoan K(+) current. The channel underlies a pH-triggered membrane hyperpolarization during the process of sperm capacitation, as sperm encounter the alkaline environment near the ovum in the female reproductive tract, thereby playing an essential for male fertility. In Macaca fascicularis (Crab-eating macaque), this protein is Potassium channel subfamily U member 1 (KCNU1).